Consider the following 295-residue polypeptide: MADYLVKSVAGNEMFRAYAVSATGVVAEAQRRHDTWSAASAALGRSLVGTLLLASSVLKGEEQMTVKINGNGPVGGIVVDGNAKGTVKGYLQHPHVHLPLNDKHKIDVKAAVGTDGFLSVTKDQGVGDPFTGTVALVSGELGEDFTYYLAQSEQIPSAVGLSVFVNDDNSIGVAGGFLVQVLPNATDEAISSLENKLKDMPLVSQLMRDGKSPEDILDLLFDGDVKVLDKMPVKFECDCSKERFAEALMALPKHEVQAMIDEDHGATAVCHFCGDQYQFSERELEAVLSRSKGDA.

2 disulfide bridges follow: Cys237–Cys239 and Cys270–Cys273.

The protein belongs to the HSP33 family. Post-translationally, under oxidizing conditions two disulfide bonds are formed involving the reactive cysteines. Under reducing conditions zinc is bound to the reactive cysteines and the protein is inactive.

The protein localises to the cytoplasm. Redox regulated molecular chaperone. Protects both thermally unfolding and oxidatively damaged proteins from irreversible aggregation. Plays an important role in the bacterial defense system toward oxidative stress. In Lactiplantibacillus plantarum (strain ATCC BAA-793 / NCIMB 8826 / WCFS1) (Lactobacillus plantarum), this protein is 33 kDa chaperonin.